The sequence spans 270 residues: Formamidopyrimidine-DNA glycosylase (270 aa).

Catalysis depends on Pro-2, which acts as the Schiff-base intermediate with DNA. Glu-3 (proton donor) is an active-site residue. Lys-58 acts as the Proton donor; for beta-elimination activity in catalysis. DNA-binding residues include His-90, Arg-109, and Arg-152. The segment at 237–270 (RVYGREGEPCQCGGVVKRIVQGGRSTFFCPRCQK) adopts an FPG-type zinc-finger fold. Arg-260 serves as the catalytic Proton donor; for delta-elimination activity.

The protein belongs to the FPG family. Monomer. Zn(2+) serves as cofactor.

It carries out the reaction Hydrolysis of DNA containing ring-opened 7-methylguanine residues, releasing 2,6-diamino-4-hydroxy-5-(N-methyl)formamidopyrimidine.. It catalyses the reaction 2'-deoxyribonucleotide-(2'-deoxyribose 5'-phosphate)-2'-deoxyribonucleotide-DNA = a 3'-end 2'-deoxyribonucleotide-(2,3-dehydro-2,3-deoxyribose 5'-phosphate)-DNA + a 5'-end 5'-phospho-2'-deoxyribonucleoside-DNA + H(+). In terms of biological role, involved in base excision repair of DNA damaged by oxidation or by mutagenic agents. Acts as a DNA glycosylase that recognizes and removes damaged bases. Has a preference for oxidized purines, such as 7,8-dihydro-8-oxoguanine (8-oxoG). Has AP (apurinic/apyrimidinic) lyase activity and introduces nicks in the DNA strand. Cleaves the DNA backbone by beta-delta elimination to generate a single-strand break at the site of the removed base with both 3'- and 5'-phosphates. The protein is Formamidopyrimidine-DNA glycosylase of Novosphingobium aromaticivorans (strain ATCC 700278 / DSM 12444 / CCUG 56034 / CIP 105152 / NBRC 16084 / F199).